We begin with the raw amino-acid sequence, 894 residues long: DNA mismatch repair protein MutS (894 aa).

ATP is bound at residue 632–639; it reads GPNMGGKS.

This sequence belongs to the DNA mismatch repair MutS family.

Functionally, this protein is involved in the repair of mismatches in DNA. It is possible that it carries out the mismatch recognition step. This protein has a weak ATPase activity. The polypeptide is DNA mismatch repair protein MutS (Paraburkholderia xenovorans (strain LB400)).